Here is a 330-residue protein sequence, read N- to C-terminus: Probable cytosolic iron-sulfur protein assembly protein ciao1-A (330 aa).

WD repeat units lie at residues 14 to 53 (HPDS…WECK), 59 to 98 (GHQR…FECL), 103 to 142 (GHEN…EYEC), 148 to 187 (SHTQ…WECR), 192 to 231 (GHTS…GGQD), 243 to 282 (FHGR…DPDQ), and 294 to 330 (AHSQ…QSEV).

It belongs to the WD repeat CIA1 family. In terms of assembly, component of the CIA complex.

Key component of the cytosolic iron-sulfur protein assembly (CIA) complex, a multiprotein complex that mediates the incorporation of iron-sulfur cluster into extramitochondrial Fe/S proteins. This Salmo salar (Atlantic salmon) protein is Probable cytosolic iron-sulfur protein assembly protein ciao1-A (ciao1a).